Here is a 318-residue protein sequence, read N- to C-terminus: Basic leucine zipper (bZIP) transcription factor atfB (318 aa).

Disordered stretches follow at residues 79–100 (LKNT…KKLQ) and 114–164 (FNSS…EKRE). Residues 160-199 (REKREKFLERNRLAASKCRQKKKEHTKLLETRFREVSSKK) are basic motif. Residues 160–223 (REKREKFLER…LNLKNEMLRH (64 aa)) form the bZIP domain. Positions 202–216 (LESEIEHLRSEVLNL) are leucine-zipper. Positions 247-304 (TPNRDLVSPMRSPEQMTASTPHGLSFGFDGPMQLPSEMGSPLDQRRDSEQSIMTESSY) are disordered.

It belongs to the bZIP family. ATF subfamily.

The protein localises to the nucleus. Functionally, transcription factor that acts as a key player in the regulatory circuit that integrates secondary metabolism and cellular response to oxidative stress. Regulates the genes involved in development, stress response, and secondary metabolism through direct binding to their promoters. Particularly involved in the resistance to oxidative stress in asexual conidiospores. Binds aflatoxin gene promoters carrying the cAMP-response element (CRE1) under aflatoxin-inducing conditions. The sequence is that of Basic leucine zipper (bZIP) transcription factor atfB from Aspergillus parasiticus (strain ATCC 56775 / NRRL 5862 / SRRC 143 / SU-1).